Consider the following 350-residue polypeptide: Inner membrane protein YhiM (350 aa).

Over Met1–Asn2 the chain is Cytoplasmic. Residues Ile3–Leu23 form a helical membrane-spanning segment. The Periplasmic segment spans residues Gly24 to His41. The chain crosses the membrane as a helical span at residues Val42–Ser62. Residues Gln63–Thr74 lie on the Cytoplasmic side of the membrane. The helical transmembrane segment at Leu75 to Leu95 threads the bilayer. The Periplasmic segment spans residues Ala96–Glu104. The chain crosses the membrane as a helical span at residues Phe105 to Ala125. At Ala126–Asn157 the chain is on the cytoplasmic side. The chain crosses the membrane as a helical span at residues Cys158–Leu178. Residues Arg179 to Gly190 lie on the Periplasmic side of the membrane. Residues His191 to Val211 form a helical membrane-spanning segment. The Cytoplasmic portion of the chain corresponds to His212–Leu225. Residues Trp226–Val246 traverse the membrane as a helical segment. Residues Ser247–Gly257 lie on the Periplasmic side of the membrane. The helical transmembrane segment at Ile258 to Ala278 threads the bilayer. At Leu279–Arg290 the chain is on the cytoplasmic side. A helical membrane pass occupies residues Ile291–Glu311. Residues Met312–Arg324 are Periplasmic-facing. The chain crosses the membrane as a helical span at residues Val325–Ala345. Residues Gly346–Lys350 are Cytoplasmic-facing.

Its subcellular location is the cell inner membrane. The chain is Inner membrane protein YhiM (yhiM) from Escherichia coli (strain K12).